The sequence spans 187 residues: Oligoribonuclease (187 aa).

In terms of domain architecture, Exonuclease spans 7–170 (LCWLDMEMTG…DDILESIEEM (164 aa)). Tyr-128 is an active-site residue.

The protein belongs to the oligoribonuclease family.

It is found in the cytoplasm. 3'-to-5' exoribonuclease specific for small oligoribonucleotides. The protein is Oligoribonuclease of Neisseria meningitidis serogroup B (strain ATCC BAA-335 / MC58).